The primary structure comprises 206 residues: Inner membrane-spanning protein YciB (206 aa).

The next 5 helical transmembrane spans lie at 22–42, 50–70, 76–96, 118–138, and 148–168; these read IYTA…LTYF, MQVI…FLHD, WKVT…HIMG, INWA…YVAF, and FKVF…GVYI. A compositionally biased stretch (basic and acidic residues) spans 178–189; that stretch reads LPKDKHQQRDQE. The interval 178–206 is disordered; that stretch reads LPKDKHQQRDQETQNDTQQELSGKNTEEK. Residues 191–206 are compositionally biased toward polar residues; sequence QNDTQQELSGKNTEEK.

Belongs to the YciB family.

Its subcellular location is the cell inner membrane. Functionally, plays a role in cell envelope biogenesis, maintenance of cell envelope integrity and membrane homeostasis. The chain is Inner membrane-spanning protein YciB from Vibrio atlanticus (strain LGP32) (Vibrio splendidus (strain Mel32)).